The sequence spans 336 residues: D-altritol 5-dehydrogenase (336 aa).

The Zn(2+) site is built by Cys-37, His-59, Glu-60, Cys-89, Cys-92, Cys-95, and Cys-103.

It belongs to the zinc-containing alcohol dehydrogenase family. Zn(2+) is required as a cofactor.

It carries out the reaction D-altritol + NAD(+) = keto-D-tagatose + NADH + H(+). It functions in the pathway carbohydrate metabolism. Involved in D-altritol catabolism. Catalyzes the oxidation of D-altritol to D-tagatose. The chain is D-altritol 5-dehydrogenase from Agrobacterium fabrum (strain C58 / ATCC 33970) (Agrobacterium tumefaciens (strain C58)).